The primary structure comprises 240 residues: Putative outer membrane protein RT0057 (240 aa).

An N-terminal signal peptide occupies residues 1-20 (MLKKLCVILFISSITINSHA).

Belongs to the OmpW/AlkL family.

Its subcellular location is the cell outer membrane. This is Putative outer membrane protein RT0057 from Rickettsia typhi (strain ATCC VR-144 / Wilmington).